The primary structure comprises 167 residues: Phosphopantetheine adenylyltransferase (167 aa).

Substrate is bound at residue T9. ATP is bound by residues 9 to 10 (TF) and H17. Substrate contacts are provided by K41, L73, and R87. Residues 88-90 (GLR), E98, and 123-129 (NSYISST) each bind ATP.

Belongs to the bacterial CoaD family. Homohexamer. Mg(2+) serves as cofactor.

Its subcellular location is the cytoplasm. It carries out the reaction (R)-4'-phosphopantetheine + ATP + H(+) = 3'-dephospho-CoA + diphosphate. It participates in cofactor biosynthesis; coenzyme A biosynthesis; CoA from (R)-pantothenate: step 4/5. In terms of biological role, reversibly transfers an adenylyl group from ATP to 4'-phosphopantetheine, yielding dephospho-CoA (dPCoA) and pyrophosphate. The polypeptide is Phosphopantetheine adenylyltransferase (Chromohalobacter salexigens (strain ATCC BAA-138 / DSM 3043 / CIP 106854 / NCIMB 13768 / 1H11)).